Consider the following 56-residue polypeptide: Large ribosomal subunit protein bL32 (56 aa).

The interval 1–26 (MAVQQNKPTRSKRGMRRSHDSLTTAA) is disordered.

This sequence belongs to the bacterial ribosomal protein bL32 family.

This Erwinia tasmaniensis (strain DSM 17950 / CFBP 7177 / CIP 109463 / NCPPB 4357 / Et1/99) protein is Large ribosomal subunit protein bL32.